The sequence spans 466 residues: Ribulose bisphosphate carboxylase large chain (466 aa).

The residue at position 4 (Lys4) is an N6,N6,N6-trimethyllysine. 2 residues coordinate substrate: Asn113 and Thr163. Lys165 (proton acceptor) is an active-site residue. Lys167 contributes to the substrate binding site. Positions 191, 193, and 194 each coordinate Mg(2+). At Lys191 the chain carries N6-carboxylysine. His284 serves as the catalytic Proton acceptor. Substrate is bound by residues Arg285, His317, and Ser369.

Belongs to the RuBisCO large chain family. Type I subfamily. As to quaternary structure, heterohexadecamer of 8 large chains and 8 small chains; disulfide-linked. The disulfide link is formed within the large subunit homodimers. It depends on Mg(2+) as a cofactor. The disulfide bond which can form in the large chain dimeric partners within the hexadecamer appears to be associated with oxidative stress and protein turnover.

It localises to the plastid. Its subcellular location is the chloroplast. The catalysed reaction is 2 (2R)-3-phosphoglycerate + 2 H(+) = D-ribulose 1,5-bisphosphate + CO2 + H2O. It catalyses the reaction D-ribulose 1,5-bisphosphate + O2 = 2-phosphoglycolate + (2R)-3-phosphoglycerate + 2 H(+). In terms of biological role, ruBisCO catalyzes two reactions: the carboxylation of D-ribulose 1,5-bisphosphate, the primary event in carbon dioxide fixation, as well as the oxidative fragmentation of the pentose substrate in the photorespiration process. Both reactions occur simultaneously and in competition at the same active site. In Drimys winteri (Winter's bark), this protein is Ribulose bisphosphate carboxylase large chain.